A 206-amino-acid chain; its full sequence is Charged multivesicular body protein 2a homolog 1 (206 aa).

Residues 1–32 (MSFFGGNKKTPEQELKDSKRELSKGQREMDRE) form a disordered region. Over residues 9–32 (KTPEQELKDSKRELSKGQREMDRE) the composition is skewed to basic and acidic residues. Coiled coils occupy residues 12–80 (EQEL…RATK) and 114–148 (NKQT…DMFE).

This sequence belongs to the SNF7 family. As to quaternary structure, probable core component of the endosomal sorting required for transport complex III (ESCRT-III). ESCRT-III components are thought to multimerize to form a flat lattice on the perimeter membrane of the endosome.

It is found in the endosome membrane. Probable core component of the endosomal sorting required for transport complex III (ESCRT-III) which is involved in multivesicular bodies (MVBs) formation and sorting of endosomal cargo proteins into MVBs. MVBs contain intraluminal vesicles (ILVs) that are generated by invagination and scission from the limiting membrane of the endosome and are delivered to lysosomes enabling degradation of membrane proteins. The polypeptide is Charged multivesicular body protein 2a homolog 1 (chmp2a1) (Dictyostelium discoideum (Social amoeba)).